The sequence spans 273 residues: NH(3)-dependent NAD(+) synthetase (273 aa).

Residue 47–54 (GISGGQDS) coordinates ATP. Residue aspartate 53 coordinates Mg(2+). Arginine 139 lines the deamido-NAD(+) pocket. Threonine 159 contributes to the ATP binding site. Glutamate 164 contributes to the Mg(2+) binding site. Residues lysine 172 and aspartate 179 each coordinate deamido-NAD(+). Residues lysine 188 and threonine 210 each coordinate ATP. 259–260 (HK) provides a ligand contact to deamido-NAD(+).

Belongs to the NAD synthetase family. As to quaternary structure, homodimer.

It catalyses the reaction deamido-NAD(+) + NH4(+) + ATP = AMP + diphosphate + NAD(+) + H(+). It functions in the pathway cofactor biosynthesis; NAD(+) biosynthesis; NAD(+) from deamido-NAD(+) (ammonia route): step 1/1. Its function is as follows. Catalyzes the ATP-dependent amidation of deamido-NAD to form NAD. Uses ammonia as a nitrogen source. The protein is NH(3)-dependent NAD(+) synthetase of Staphylococcus haemolyticus (strain JCSC1435).